The primary structure comprises 79 residues: Toxin 3FTx-Oxy5 (79 aa).

The first 23 residues, 1–23 (MKTLLLTLVVMTIVCLDLGYTLT), serve as a signal peptide directing secretion. 4 disulfide bridges follow: C24/C41, C34/C59, C63/C71, and C72/C77.

It belongs to the three-finger toxin family. Short-chain subfamily. As to expression, expressed by the venom gland.

Its subcellular location is the secreted. The protein is Toxin 3FTx-Oxy5 of Oxyuranus microlepidotus (Inland taipan).